We begin with the raw amino-acid sequence, 657 residues long: Glycogen debranching enzyme (657 aa).

The active-site Nucleophile is aspartate 336. Glutamate 371 acts as the Proton donor in catalysis. Residues 460–479 form a disordered region; it reads ANGEENRDGTNNNHSFNHGI.

The protein belongs to the glycosyl hydrolase 13 family.

It carries out the reaction Hydrolysis of (1-&gt;6)-alpha-D-glucosidic linkages to branches with degrees of polymerization of three or four glucose residues in limit dextrin.. Its pathway is glycan degradation; glycogen degradation. Functionally, removes maltotriose and maltotetraose chains that are attached by 1,6-alpha-linkage to the limit dextrin main chain, generating a debranched limit dextrin. The sequence is that of Glycogen debranching enzyme from Enterobacter sp. (strain 638).